A 330-amino-acid polypeptide reads, in one-letter code: Exostosin-like 2 (330 aa).

At 1 to 21 (MMRGCHICKLPGRVMGIRVLR) the chain is on the cytoplasmic side. A helical; Signal-anchor for type II membrane protein membrane pass occupies residues 22 to 42 (FSLVVILVLLLVAGALTNLLP). The Lumenal segment spans residues 43 to 330 (NIKEDKMLTL…FPYANHKSKM (288 aa)). Gln-72 contacts UDP-N-acetyl-alpha-D-galactosamine. Gln-72 contributes to the UDP-N-acetyl-alpha-D-glucosamine binding site. N-linked (GlcNAc...) asparagine glycosylation is present at Asn-75. UDP-N-acetyl-alpha-D-galactosamine is bound by residues Arg-76, Asn-101, Asn-130, Arg-135, Asp-151, Asp-152, Asp-153, and Asp-245. UDP-N-acetyl-alpha-D-glucosamine-binding residues include Arg-76, Asn-101, Asn-130, Arg-135, Asp-151, Asp-152, Asp-153, Asp-245, Asp-246, and Arg-293. Asp-153 contributes to the Mn(2+) binding site. A disulfide bond links Cys-244 and Cys-296. Asp-246 is an active-site residue. Arg-293 is a UDP-N-acetyl-alpha-D-galactosamine binding site.

The protein belongs to the glycosyltransferase 47 family. The cofactor is Mn(2+).

The protein localises to the endoplasmic reticulum membrane. It catalyses the reaction 3-O-(beta-D-GlcA-(1-&gt;3)-beta-D-Gal-(1-&gt;3)-beta-D-Gal-(1-&gt;4)-beta-D-Xyl)-L-seryl-[protein] + UDP-N-acetyl-alpha-D-glucosamine = 3-O-(alpha-D-GlcNAc-(1-&gt;4)-beta-D-GlcA-(1-&gt;3)-beta-D-Gal-(1-&gt;3)-beta-D-Gal-(1-&gt;4)-beta-D-Xyl)-L-seryl-[protein] + UDP + H(+). Glycosyltransferase required for the biosynthesis of heparan-sulfate and responsible for the alternating addition of beta-1-4-linked glucuronic acid (GlcA) and alpha-1-4-linked N-acetylglucosamine (GlcNAc) units to nascent heparan sulfate chains. This is Exostosin-like 2 (Extl2) from Mus musculus (Mouse).